Here is a 243-residue protein sequence, read N- to C-terminus: Probable transcriptional regulatory protein LCABL_11860 (243 aa).

Residues 1-23 (MSGHSKWHNIQGRKNAQDSKRGK) form a disordered region.

Belongs to the TACO1 family.

The protein resides in the cytoplasm. The protein is Probable transcriptional regulatory protein LCABL_11860 of Lacticaseibacillus casei (strain BL23) (Lactobacillus casei).